The sequence spans 221 residues: Redox-sensing transcriptional repressor Rex (221 aa).

A DNA-binding region (H-T-H motif) is located at residues 17-56 (IYYYYLSSLHEAGIKRINSTEISEAIKFDAATVRRDFSYF). An NAD(+)-binding site is contributed by 91–96 (GTGNLG).

This sequence belongs to the transcriptional regulatory Rex family. As to quaternary structure, homodimer.

It is found in the cytoplasm. Functionally, modulates transcription in response to changes in cellular NADH/NAD(+) redox state. In Oenococcus oeni (strain ATCC BAA-331 / PSU-1), this protein is Redox-sensing transcriptional repressor Rex.